The primary structure comprises 208 residues: Methylthioribulose-1-phosphate dehydratase (208 aa).

His-96 and His-98 together coordinate Zn(2+).

This sequence belongs to the aldolase class II family. MtnB subfamily. Requires Zn(2+) as cofactor.

It catalyses the reaction 5-(methylsulfanyl)-D-ribulose 1-phosphate = 5-methylsulfanyl-2,3-dioxopentyl phosphate + H2O. It participates in amino-acid biosynthesis; L-methionine biosynthesis via salvage pathway; L-methionine from S-methyl-5-thio-alpha-D-ribose 1-phosphate: step 2/6. Its function is as follows. Catalyzes the dehydration of methylthioribulose-1-phosphate (MTRu-1-P) into 2,3-diketo-5-methylthiopentyl-1-phosphate (DK-MTP-1-P). The protein is Methylthioribulose-1-phosphate dehydratase of Pseudomonas fluorescens (strain Pf0-1).